The chain runs to 129 residues: uncharacterized protein (129 aa).

The protein localises to the cytoplasm. Its subcellular location is the cytosol. It is found in the nucleus. This is an uncharacterized protein from Schizosaccharomyces pombe (strain 972 / ATCC 24843) (Fission yeast).